Here is a 324-residue protein sequence, read N- to C-terminus: Anthranilate phosphoribosyltransferase (324 aa).

Residues Gly75, 78 to 79 (GD), Thr83, 85 to 88 (NVST), 102 to 110 (KHGNFGITG), and Ser114 each bind 5-phospho-alpha-D-ribose 1-diphosphate. Position 75 (Gly75) interacts with anthranilate. Ser87 contacts Mg(2+). Asn105 contacts anthranilate. Arg160 contacts anthranilate. The Mg(2+) site is built by Asp216 and Glu217.

The protein belongs to the anthranilate phosphoribosyltransferase family. As to quaternary structure, homodimer. It depends on Mg(2+) as a cofactor.

The enzyme catalyses N-(5-phospho-beta-D-ribosyl)anthranilate + diphosphate = 5-phospho-alpha-D-ribose 1-diphosphate + anthranilate. It functions in the pathway amino-acid biosynthesis; L-tryptophan biosynthesis; L-tryptophan from chorismate: step 2/5. Functionally, catalyzes the transfer of the phosphoribosyl group of 5-phosphorylribose-1-pyrophosphate (PRPP) to anthranilate to yield N-(5'-phosphoribosyl)-anthranilate (PRA). The sequence is that of Anthranilate phosphoribosyltransferase from Picrophilus torridus (strain ATCC 700027 / DSM 9790 / JCM 10055 / NBRC 100828 / KAW 2/3).